Consider the following 888-residue polypeptide: C2H2 zinc finger transcription factor sltA (888 aa).

3 disordered regions span residues M1–P78, I132–N176, and R388–P407. Polar residues-rich tracts occupy residues P23–E32, G167–N176, and R388–P397. C2H2-type zinc fingers lie at residues Q500–H522 and Y561–H586. Positions D589–P663 are disordered. Over residues K602–E632 the composition is skewed to polar residues.

The protein localises to the nucleus. In terms of biological role, transcription factor that contributes to azole resistance by coregulating the expression of the drug target erg11A and the drug efflux pump mdr1. Binds to the 5'-AGGCA-3' motif in the promoters of ergosterol biosynthesis and drug pump genes to regulate their expression. Is able to interact with the promoters of sltA, sltB, erg11A, erg13A, erg24A, mdr1, abcE and mfsC. Involved in antifungal drug resistance to azoles, terbinafine, and simvastatin but not amphotericin B or caspofungin. The protein is C2H2 zinc finger transcription factor sltA of Aspergillus fumigatus (strain CBS 144.89 / FGSC A1163 / CEA10) (Neosartorya fumigata).